The chain runs to 212 residues: Large ribosomal subunit protein bL25 (212 aa).

The interval 183-212 (HDLPVASIHKPKGAKADDAEGEEGEEGGEE) is disordered. Residues 201 to 212 (AEGEEGEEGGEE) show a composition bias toward acidic residues.

The protein belongs to the bacterial ribosomal protein bL25 family. CTC subfamily. As to quaternary structure, part of the 50S ribosomal subunit; part of the 5S rRNA/L5/L18/L25 subcomplex. Contacts the 5S rRNA. Binds to the 5S rRNA independently of L5 and L18.

This is one of the proteins that binds to the 5S RNA in the ribosome where it forms part of the central protuberance. The protein is Large ribosomal subunit protein bL25 of Marinobacter nauticus (strain ATCC 700491 / DSM 11845 / VT8) (Marinobacter aquaeolei).